A 187-amino-acid polypeptide reads, in one-letter code: dCTP deaminase (187 aa).

DCTP contacts are provided by residues 110–115 (KSTYAR), 134–136 (TLE), Q155, Y169, and Q179. The active-site Proton donor/acceptor is E136.

The protein belongs to the dCTP deaminase family. In terms of assembly, homotrimer.

It carries out the reaction dCTP + H2O + H(+) = dUTP + NH4(+). It participates in pyrimidine metabolism; dUMP biosynthesis; dUMP from dCTP (dUTP route): step 1/2. Catalyzes the deamination of dCTP to dUTP. This chain is dCTP deaminase, found in Bordetella pertussis (strain Tohama I / ATCC BAA-589 / NCTC 13251).